Here is a 216-residue protein sequence, read N- to C-terminus: MAAGPRTSVLLAFTLLCLPWPQEAGAFPAMPLSSLFANAVLRAQHLHQLAADTYKEFERTYIPEGQRYSIQNAQAAFCFSETIPAPTGKDEAQQRSDVELLRFSLLLIQSWLGPVQFLSRVFTNSLVFGTSDRVYEKLKDLEEGIQALMRELEDGSPRAGQILRQTYDKFDTNLRSDDALLKNYGLLSCFKKDLHKAETYLRVMKCRRFVESSCAF.

An N-terminal signal peptide occupies residues 1–26; it reads MAAGPRTSVLLAFTLLCLPWPQEAGA. Residue H45 participates in Zn(2+) binding. A disulfide bridge connects residues C78 and C189. Residue S131 is modified to Phosphoserine. E198 provides a ligand contact to Zn(2+). Cysteines 206 and 214 form a disulfide.

The protein belongs to the somatotropin/prolactin family.

It localises to the secreted. Functionally, plays an important role in growth control. Its major role in stimulating body growth is to stimulate the liver and other tissues to secrete IGF1. It stimulates both the differentiation and proliferation of myoblasts. It also stimulates amino acid uptake and protein synthesis in muscle and other tissues. This is Somatotropin (GH1) from Camelus dromedarius (Dromedary).